We begin with the raw amino-acid sequence, 255 residues long: Diphthine synthase (255 aa).

S-adenosyl-L-methionine is bound by residues L9, D85, V88, S113–I114, L164, A207, and H232.

It belongs to the diphthine synthase family. Homodimer.

It carries out the reaction 2-[(3S)-amino-3-carboxypropyl]-L-histidyl-[translation elongation factor 2] + 3 S-adenosyl-L-methionine = diphthine-[translation elongation factor 2] + 3 S-adenosyl-L-homocysteine + 3 H(+). It participates in protein modification; peptidyl-diphthamide biosynthesis. Its function is as follows. S-adenosyl-L-methionine-dependent methyltransferase that catalyzes the trimethylation of the amino group of the modified target histidine residue in translation elongation factor 2 (EF-2), to form an intermediate called diphthine. The three successive methylation reactions represent the second step of diphthamide biosynthesis. The sequence is that of Diphthine synthase from Methanococcus maripaludis (strain DSM 14266 / JCM 13030 / NBRC 101832 / S2 / LL).